A 122-amino-acid chain; its full sequence is Large ribosomal subunit protein uL14 (122 aa).

The protein belongs to the universal ribosomal protein uL14 family. In terms of assembly, part of the 50S ribosomal subunit. Forms a cluster with proteins L3 and L19. In the 70S ribosome, L14 and L19 interact and together make contacts with the 16S rRNA in bridges B5 and B8.

In terms of biological role, binds to 23S rRNA. Forms part of two intersubunit bridges in the 70S ribosome. The chain is Large ribosomal subunit protein uL14 from Thermobifida fusca (strain YX).